We begin with the raw amino-acid sequence, 46 residues long: Defensin Tk-AMP-D6.1 (46 aa).

Cystine bridges form between Cys3–Cys46, Cys14–Cys34, Cys20–Cys40, and Cys24–Cys42.

In terms of biological role, plant defense peptide. The chain is Defensin Tk-AMP-D6.1 from Triticum kiharae (Wheat).